We begin with the raw amino-acid sequence, 443 residues long: Dynein regulatory complex protein 9 (443 aa).

2 disordered regions span residues 1-40 (MEEDSQEDSNLPPKVWHSEMTVSVTGKPPSTVEEDGLPKE) and 415-443 (GFKMPKDKVDSKDSKGKGKGKDKRRGKKK). Positions 393-422 (ELKSVIKLQAWWRGTMIRREIGGFKMPKDK) constitute an IQ domain. Residues 415 to 430 (GFKMPKDKVDSKDSKG) are compositionally biased toward basic and acidic residues. Over residues 431-443 (KGKGKDKRRGKKK) the composition is skewed to basic residues.

Belongs to the DRC9 family. Component of the nexin-dynein regulatory complex (N-DRC). Interacts (via IQ domain) with CALM when calcium levels are low. Does not interact with CALM in the presence of Ca(2+). Interacts with the HSP70 proteins HSPA1L and HSPA8. May form a complex with CAMK4 and HSP70.

The protein resides in the cytoplasm. The protein localises to the cell projection. It localises to the cilium. Its subcellular location is the flagellum. It is found in the cytoskeleton. The protein resides in the flagellum axoneme. Component of the nexin-dynein regulatory complex (N-DRC), a key regulator of ciliary/flagellar motility which maintains the alignment and integrity of the distal axoneme and regulates microtubule sliding in motile axonemes. Binds calmodulin when cellular Ca(2+) levels are low and thereby contributes to the regulation of calcium and calmodulin-dependent protein kinase IV (CAMK4) activity; contributes to the regulation of CAMK4 signaling cascades. Required for normal axoneme assembly in sperm flagella, normal sperm tail formation and for male fertility. The protein is Dynein regulatory complex protein 9 (IQCG) of Macaca fascicularis (Crab-eating macaque).